Consider the following 156-residue polypeptide: Small ribosomal subunit protein uS7 (156 aa).

Belongs to the universal ribosomal protein uS7 family. Part of the 30S ribosomal subunit. Contacts proteins S9 and S11.

Functionally, one of the primary rRNA binding proteins, it binds directly to 16S rRNA where it nucleates assembly of the head domain of the 30S subunit. Is located at the subunit interface close to the decoding center, probably blocks exit of the E-site tRNA. The polypeptide is Small ribosomal subunit protein uS7 (Arthrospira platensis (Spirulina platensis)).